The chain runs to 1126 residues: MASDGTSPLPGPDMSMKPGTGLSPFSALPFAPPPPVPPDQPLWEPSPQPPIPPVFSPSNPLLLSAFPSPLLVTGEGGPGPSVAGTGQVIVKVKTDVGPAESSQTQNLIVTQTALNWIPSGAPCGSQEGPPPPRYVTASNVKTILPAVAVGVSQEGLAGLPLQVLPPAAQLAPIVPLEKPWPGTQATTMEGGPVAARKPSQGDLAYASKGVYENYRRWQRYKVLARTHLSQSPDVEALSCFLIPVLRSLARLKPTMTLEEGLPRALQEWERTSNFDRMIFYEMAEKFMEFEAEEETQIQNAQLMNGSPGLSPIAPLKLDPPGSMVPEACQQPVYIPKKAASKTRAPRRRQRKPQRPPVPEAPKEIPPEAVQEYVDIMDGLMGSYVDTGKTEEEEEGQQEGAGMYPDPSLLSYIDELCSQEVFVSKVEAVIHPQFLADLLSPEEQRDPLSLLEELEQEEGLNLAQLVQKRLLALEEEDAQTPPSCSGAQSDSSPSVSDEDEDGGQRRRPSPGLQGAAGIVRIGKSASPGKQAREIHGGQEQTLGGPAGIHKDGNNLPSPSSWDVQLELTASQGMPVLLGMERKMSGKAIKQLSATQDGHLGRTGSPGYYPVADRNPEVLPCCWQEDPQHMRAPNFDVGLTEPVPLQGLGLEKQALTLQIGKRIGGAGMLTRGREPPSVVSQKGSSRAVRGDDRGPGMLQSYSQNHSPGAAGNLDRVSLSPGLWLSSDMGAVGLELPLQIETVIDSIQDEACRREDQALNSRNSASLGPRKNTVPKDVGNSVIPSGGPDTTAVPEKRNPCSLPGSLMASGPGLRSKEKISKENQALSPKTIQNPSDLWAEACPPLLPTLVSSTLGSSKDTLIPTCQGNLLIIGTQDASSLAQTSQKAESRGNLLFPLLENIDQVTILDVKDDSCPQPGVSKDSCLSNFNSYNLQGEGREDTVSSKPTDLVPLQDNQESYTHETTKLTNGQGQGSTSPRWATRDAYILRETPIKEKCTSADRAKRRETEKEEEDEELSNFSYLLASKLSLSSGGLPLSTRQASGGQGIVKTSRHSTEVDDLGQPSPPPKSGKQALVGSPATVVERDQQGAQFNGSGQKPLALGMAQLPQPRKRRRDGFVTSKRKKRRRSQ.

7 disordered regions span residues 1-56, 334-367, 475-515, 537-559, 664-692, 755-810, and 932-1014; these read MASD…PVFS, IPKK…IPPE, EDAQ…QGAA, QEQT…SPSS, AGML…DDRG, ALNS…GPGL, and GEGR…EELS. The segment covering 30 to 55 has biased composition (pro residues); the sequence is FAPPPPVPPDQPLWEPSPQPPIPPVF. The span at 338–353 shows a compositional bias: basic residues; sequence AASKTRAPRRRQRKPQ. Over residues 962-975 the composition is skewed to polar residues; the sequence is KLTNGQGQGSTSPR. Ser-973 is modified (phosphoserine). Residues 987–1005 show a composition bias toward basic and acidic residues; the sequence is TPIKEKCTSADRAKRRETE. Phosphoserine occurs at positions 1022, 1025, and 1027. Positions 1032-1126 are disordered; sequence PLSTRQASGG…SKRKKRRRSQ (95 aa). Gln-1042 carries the N5-methylglutamine modification. Positions 1106–1126 are enriched in basic residues; it reads PRKRRRDGFVTSKRKKRRRSQ.

This sequence belongs to the NUT family. Methylated at Gln-1042 by N6AMT1. Post-translationally, phosphorylation on Ser-1022, Ser-1025 or Ser-1027 is important for cytoplasmic export.

It is found in the cytoplasm. Its subcellular location is the nucleus. In terms of biological role, plays a role in the regulation of proliferation. Regulates TERT expression by modulating SP1 binding to TERT promoter binding sites. This is NUT family member 1 from Mus musculus (Mouse).